Reading from the N-terminus, the 286-residue chain is Bifunctional protein FolD (286 aa).

Residues 166-168 and isoleucine 232 contribute to the NADP(+) site; that span reads GAS.

It belongs to the tetrahydrofolate dehydrogenase/cyclohydrolase family. As to quaternary structure, homodimer.

It catalyses the reaction (6R)-5,10-methylene-5,6,7,8-tetrahydrofolate + NADP(+) = (6R)-5,10-methenyltetrahydrofolate + NADPH. The catalysed reaction is (6R)-5,10-methenyltetrahydrofolate + H2O = (6R)-10-formyltetrahydrofolate + H(+). The protein operates within one-carbon metabolism; tetrahydrofolate interconversion. Catalyzes the oxidation of 5,10-methylenetetrahydrofolate to 5,10-methenyltetrahydrofolate and then the hydrolysis of 5,10-methenyltetrahydrofolate to 10-formyltetrahydrofolate. The protein is Bifunctional protein FolD of Vibrio parahaemolyticus serotype O3:K6 (strain RIMD 2210633).